We begin with the raw amino-acid sequence, 441 residues long: Major capsid protein (441 aa).

The propeptide occupies 1–51 (MSKKLVTEEMRTQWLPVLEKKSEQIQPLTAENVSVRLLQNQAEWNAKNLGE).

The protein localises to the virion. This Serratia marcescens (Serratia marcescens bacteriophage KSP90) protein is Major capsid protein.